Reading from the N-terminus, the 312-residue chain is Structure-specific endonuclease subunit SLX1 (312 aa).

Residues D9–K92 form the GIY-YIG domain. The SLX1-type zinc finger occupies C219–C282.

This sequence belongs to the SLX1 family. In terms of assembly, forms a heterodimer with SLX4. It depends on a divalent metal cation as a cofactor.

It localises to the nucleus. Functionally, catalytic subunit of the SLX1-SLX4 structure-specific endonuclease that resolves DNA secondary structures generated during DNA repair and recombination. Has endonuclease activity towards branched DNA substrates, introducing single-strand cuts in duplex DNA close to junctions with ss-DNA. The polypeptide is Structure-specific endonuclease subunit SLX1 (Candida glabrata (strain ATCC 2001 / BCRC 20586 / JCM 3761 / NBRC 0622 / NRRL Y-65 / CBS 138) (Yeast)).